Reading from the N-terminus, the 159-residue chain is Ribosomal RNA large subunit methyltransferase H (159 aa).

S-adenosyl-L-methionine is bound by residues L76, G108, and 127–132 (FSKMTL).

The protein belongs to the RNA methyltransferase RlmH family. In terms of assembly, homodimer.

The protein localises to the cytoplasm. The catalysed reaction is pseudouridine(1915) in 23S rRNA + S-adenosyl-L-methionine = N(3)-methylpseudouridine(1915) in 23S rRNA + S-adenosyl-L-homocysteine + H(+). Functionally, specifically methylates the pseudouridine at position 1915 (m3Psi1915) in 23S rRNA. This is Ribosomal RNA large subunit methyltransferase H from Bacillus mycoides (strain KBAB4) (Bacillus weihenstephanensis).